The sequence spans 170 residues: NADH-quinone oxidoreductase subunit B (170 aa).

Residues cysteine 37, cysteine 38, cysteine 102, and cysteine 131 each coordinate [4Fe-4S] cluster.

This sequence belongs to the complex I 20 kDa subunit family. In terms of assembly, NDH-1 is composed of 14 different subunits. Subunits NuoB, C, D, E, F, and G constitute the peripheral sector of the complex. The cofactor is [4Fe-4S] cluster.

Its subcellular location is the cell inner membrane. It catalyses the reaction a quinone + NADH + 5 H(+)(in) = a quinol + NAD(+) + 4 H(+)(out). NDH-1 shuttles electrons from NADH, via FMN and iron-sulfur (Fe-S) centers, to quinones in the respiratory chain. The immediate electron acceptor for the enzyme in this species is believed to be ubiquinone. Couples the redox reaction to proton translocation (for every two electrons transferred, four hydrogen ions are translocated across the cytoplasmic membrane), and thus conserves the redox energy in a proton gradient. In Geobacter sulfurreducens (strain ATCC 51573 / DSM 12127 / PCA), this protein is NADH-quinone oxidoreductase subunit B.